We begin with the raw amino-acid sequence, 179 residues long: Natural killer cells antigen CD94 (179 aa).

Topologically, residues 1 to 10 are cytoplasmic; sequence MAVFKTTLWW. The chain crosses the membrane as a helical; Signal-anchor for type II membrane protein span at residues 11 to 31; sequence LISGTLGIICLSLTATLGILL. At 32 to 179 the chain is on the extracellular side; it reads KNSFTKLSIE…NRYICKQQLI (148 aa). 2 disulfide bridges follow: cysteine 58-cysteine 70 and cysteine 61-cysteine 72. The C-type lectin domain occupies 68–175; the sequence is YRCNCYFISS…CEDKNRYICK (108 aa). N-linked (GlcNAc...) asparagine glycosylation is found at asparagine 83 and asparagine 132. 2 disulfides stabilise this stretch: cysteine 89–cysteine 174 and cysteine 152–cysteine 166.

Can form disulfide-bonded heterodimer with NKG2 family members KLRC1 and KLRC2. KLRD1-KLRC1 heterodimer interacts with peptide-bound MHC-E-B2M heterotrimeric complex. KLRD1 plays a prominent role in directly interacting with MHC-E. KLRD1-KLRC1 interacts with much higher affinity with peptide-bound MHC-E-B2M than KLRD1-KLRC2. Interacts with the adapter protein TYROBP/DAP12; this interaction is required for cell surface expression and cell activation. Natural killer cells.

It is found in the cell membrane. Functionally, immune receptor involved in self-nonself discrimination. In complex with KLRC1 or KLRC2 on cytotoxic and regulatory lymphocyte subsets, recognizes non-classical major histocompatibility (MHC) class Ib molecule MHC-E loaded with self-peptides derived from the signal sequence of classical MHC class Ia and non-classical MHC class Ib molecules. Enables cytotoxic cells to monitor the expression of MHC class I molecules in healthy cells and to tolerate self. Primarily functions as a ligand binding subunit as it lacks the capacity to signal. KLRD1-KLRC1 acts as an immune inhibitory receptor. Key inhibitory receptor on natural killer (NK) cells that regulates their activation and effector functions. Dominantly counteracts T cell receptor signaling on a subset of memory/effector CD8-positive T cells as part of an antigen-driven response to avoid autoimmunity. On intraepithelial CD8-positive gamma-delta regulatory T cells triggers TGFB1 secretion, which in turn limits the cytotoxic programming of intraepithelial CD8-positive alpha-beta T cells, distinguishing harmless from pathogenic antigens. In MHC-E-rich tumor microenvironment, acts as an immune inhibitory checkpoint and may contribute to progressive loss of effector functions of NK cells and tumor-specific T cells, a state known as cell exhaustion. Upon MHC-E-peptide binding, transmits intracellular signals through KLRC1 immunoreceptor tyrosine-based inhibition motifs (ITIMs) by recruiting INPP5D/SHIP-1 and INPPL1/SHIP-2 tyrosine phosphatases to ITIMs, and ultimately opposing signals transmitted by activating receptors through dephosphorylation of proximal signaling molecules. Its function is as follows. KLRD1-KLRC2 acts as an immune activating receptor. On cytotoxic lymphocyte subsets recognizes MHC-E loaded with signal sequence-derived peptides from non-classical MHC class Ib MHC-G molecules, likely playing a role in the generation and effector functions of adaptive NK cells and in maternal-fetal tolerance during pregnancy. Regulates the effector functions of terminally differentiated cytotoxic lymphocyte subsets, and in particular may play a role in adaptive NK cell response to viral infection. Upon MHC-E-peptide binding, transmits intracellular signals via the adapter protein TYROBP/DAP12, triggering the phosphorylation of proximal signaling molecules and cell activation. In Pongo pygmaeus (Bornean orangutan), this protein is Natural killer cells antigen CD94 (KLRD1).